Reading from the N-terminus, the 131-residue chain is Protein SOB FIVE-LIKE 4 (131 aa).

2 disordered regions span residues 1 to 21 (MDKE…SSPI) and 40 to 131 (IYNY…YRMK). The segment covering 8 to 18 (SSESGWTTYLS) has biased composition (polar residues). The short motif at 11–16 (SGWTTY) is the SOFL-A element. The span at 46–58 (KVEHEEERNKDSD) shows a compositional bias: basic and acidic residues. Residues 60-69 (SMASDASSGP) carry the SOFL-B motif. The segment covering 79-109 (KALDLKNGKNEGNSKSKNDDDHHNHYHDGKK) has biased composition (basic and acidic residues). Positions 107–114 (GKKTSNSY) match the Nuclear localization signal motif. The span at 114-131 (YRKKDKKKRENKSTYRMK) shows a compositional bias: basic residues.

The protein belongs to the SOFL plant protein family. Expressed, at low levels, in seedlings, roots, flowers and siliques.

It localises to the cytoplasm. It is found in the nucleus. Its function is as follows. Involved in cytokinin-mediated development. The chain is Protein SOB FIVE-LIKE 4 from Arabidopsis thaliana (Mouse-ear cress).